Reading from the N-terminus, the 274-residue chain is Protein RecA (274 aa).

43–50 (GPESSGKT) contacts ATP.

This sequence belongs to the RecA family.

It is found in the cytoplasm. In terms of biological role, can catalyze the hydrolysis of ATP in the presence of single-stranded DNA, the ATP-dependent uptake of single-stranded DNA by duplex DNA, and the ATP-dependent hybridization of homologous single-stranded DNAs. It interacts with LexA causing its activation and leading to its autocatalytic cleavage. The chain is Protein RecA from Neisseria mucosa.